A 706-amino-acid chain; its full sequence is Termination factor NPH-I homolog (706 aa).

A Helicase ATP-binding domain is found at 62-227; the sequence is IGQGENTRGL…VPCFNMLSGR (166 aa). Residue 75 to 82 coordinates ATP; the sequence is HQMGMGKT. The DEAH box signature appears at 168-171; sequence DEAH. Residues 417-599 enclose the Helicase C-terminal domain; it reads QCLQPLKVLE…HLNSAFRDLL (183 aa).

This sequence belongs to the DEAD box helicase family. DEAH subfamily. Part of the viral DNA-directed RNA polymerase that consists of 8 polII-like subunits (RPB1, RPB2, RPB3, RPB5, RPB6, RPB7, RPB9, RPB10), a capping enzyme and a termination factor.

It localises to the virion. Putative DNA-dependent ATPase required for providing the needed energy to achieve the termination of early transcripts. In African swine fever virus (isolate Warthog/Namibia/Wart80/1980) (ASFV), this protein is Termination factor NPH-I homolog.